The following is a 955-amino-acid chain: uncharacterized protein (955 aa).

The region spanning 23-90 (ANNYLEEFQK…RNSLLQLFLA (68 aa)) is the Importin N-terminal domain.

This is an uncharacterized protein from Schizosaccharomyces pombe (strain 972 / ATCC 24843) (Fission yeast).